Reading from the N-terminus, the 1175-residue chain is Structural maintenance of chromosomes protein 2-1 (1175 aa).

The 1160-residue stretch at 2–1161 (HIKEICLEGF…NVLFRTKFVD (1160 aa)) folds into the Zinc-hook domain. 32–39 (GLNGSGKS) contacts ATP. The stretch at 172-508 (RMYENKKEAA…AQLANFQFTY (337 aa)) forms a coiled coil. The SMC hinge domain maps to 518–638 (SKVKGVVAKL…KTTDVAKEVA (121 aa)). A coiled-coil region spans residues 673–1028 (LRKLHDLAEA…ELDEKKKETL (356 aa)).

Belongs to the SMC family. SMC2 subfamily. Forms a heterodimer with SMC4. Component of the condensin complex, which contains the SMC2 and SMC4 heterodimer, and three non SMC subunits that probably regulate the complex: CAPH, CAPD2 and CAPG. As to expression, highly expressed in roots and young floral buds.

It is found in the nucleus. Functionally, central component of the condensin complex, a complex required for conversion of interphase chromatin into mitotic-like condense chromosomes. The condensin complex probably introduces positive supercoils into relaxed DNA in the presence of type I topoisomerases and converts nicked DNA into positive knotted forms in the presence of type II topoisomerases. Also involved in chromosome segregation in meiosis. In Arabidopsis thaliana (Mouse-ear cress), this protein is Structural maintenance of chromosomes protein 2-1 (SMC2-1).